The primary structure comprises 464 residues: MKGKVIQVMGPVVDVEFDGYLPEINEAIDVTLADASKDRLVLEVAAHIGDSRVRTIAMDMTEGLVRGQECIATGGPIKVPVGEAVLGRIFNVIGDPVDEGSAIPADTERWSIHRSAPTFEEQSTKTEMFETGIKVVDLLAPYSKGGKVGLFGGAGVGKTVIIMELIHNVAFKHSGYSVFAGVGERTREGNDLYHEMKDSNVLDKVALCYGQMSEPPGARNRIALTGLTMAEYFRDEKGLDVLMFIDNIFRFAQSGSEMSALLGRIPSAVGYQPTLASEMGKLQERITSTSKGSITSVQAVYVPADDLTDPAPASVFAHLDATTVLNRKIAEKGIYPAVDPLDSTSRILSADIIGQEHYNTARGVQSVLQKYKDLQDIIAILGMDELSESDKLVVARARKIERFLSQPFFVAEVFTGSPGKYVELKDTIAGFQGILDGKYDNIPEMAFYMVGGIDEVLAKAEKMK.

152 to 159 (GGAGVGKT) lines the ATP pocket.

It belongs to the ATPase alpha/beta chains family. In terms of assembly, F-type ATPases have 2 components, CF(1) - the catalytic core - and CF(0) - the membrane proton channel. CF(1) has five subunits: alpha(3), beta(3), gamma(1), delta(1), epsilon(1). CF(0) has three main subunits: a(1), b(2) and c(9-12). The alpha and beta chains form an alternating ring which encloses part of the gamma chain. CF(1) is attached to CF(0) by a central stalk formed by the gamma and epsilon chains, while a peripheral stalk is formed by the delta and b chains.

The protein resides in the cell inner membrane. The catalysed reaction is ATP + H2O + 4 H(+)(in) = ADP + phosphate + 5 H(+)(out). In terms of biological role, produces ATP from ADP in the presence of a proton gradient across the membrane. The catalytic sites are hosted primarily by the beta subunits. In Aliarcobacter butzleri (strain RM4018) (Arcobacter butzleri), this protein is ATP synthase subunit beta.